We begin with the raw amino-acid sequence, 334 residues long: Nucleoid-associated protein YpsIP31758_2721 (334 aa).

The protein belongs to the YejK family.

It localises to the cytoplasm. The protein resides in the nucleoid. This chain is Nucleoid-associated protein YpsIP31758_2721, found in Yersinia pseudotuberculosis serotype O:1b (strain IP 31758).